Here is a 427-residue protein sequence, read N- to C-terminus: Dihydrofolate synthetase (427 aa).

Residue 34-37 (GKGS) coordinates ATP. Residues E123 and H153 each contribute to the Mg(2+) site. Positions 275 and 296 each coordinate ATP.

This sequence belongs to the folylpolyglutamate synthase family.

Its subcellular location is the cytoplasm. The catalysed reaction is 7,8-dihydropteroate + L-glutamate + ATP = 7,8-dihydrofolate + ADP + phosphate + H(+). The protein operates within cofactor biosynthesis; tetrahydrofolylpolyglutamate biosynthesis. Its function is as follows. Glutamate-adding enzyme which catalyzes the binding of the first glutamyl side chain to dihydropteroate. Leads to the de nove synthesis of tetrahydrofolate. This Saccharomyces cerevisiae (strain ATCC 204508 / S288c) (Baker's yeast) protein is Dihydrofolate synthetase (FOL3).